A 261-amino-acid polypeptide reads, in one-letter code: Fructoselysine 6-kinase (261 aa).

Belongs to the carbohydrate kinase PfkB family. In terms of assembly, monomer.

The catalysed reaction is N(6)-(D-fructosyl)-L-lysine + ATP = N(6)-(6-phospho-D-fructosyl)-L-lysine + ADP + H(+). Its pathway is carbohydrate metabolism; fructoselysine degradation; D-glucose 6-phosphate and lysine from fructoselysine: step 1/2. In terms of biological role, catalyzes the ATP-dependent phosphorylation of fructoselysine to fructoselysine 6-phosphate. Functions in a fructoselysine degradation pathway that allows E.coli to grow on fructoselysine or psicoselysine. To a much lesser extenst, is also able to phosphorylate psicoselysine. This chain is Fructoselysine 6-kinase, found in Escherichia coli (strain K12).